Reading from the N-terminus, the 1252-residue chain is Protein ITPRID2 (1252 aa).

The disordered stretch occupies residues 28-70 (CRSSWQASETEDLSTETTTQDEDEDDEEDLPGTKLPAPAGRGN). Over residues 36–57 (ETEDLSTETTTQDEDEDDEEDL) the composition is skewed to acidic residues. A Phosphothreonine modification is found at Thr-85. Ser-90, Ser-109, Ser-207, Ser-268, and Ser-328 each carry phosphoserine. 3 disordered regions span residues 306-483 (DKTE…HVPA), 552-575 (HVTPTAQDQPYFNESEEESLAPLQ), and 595-636 (FPQC…GELP). The segment covering 357-372 (TVTEEVSGSSSTVTDS) has biased composition (low complexity). 2 stretches are compositionally biased toward basic and acidic residues: residues 395–407 (SREAHSQEKDPLR) and 415–428 (DLGHDGRVSSHCEL). Residues 429–441 (ESSSELKSAQASS) are compositionally biased toward low complexity. Ser-465 bears the Phosphoserine mark. Residues Ser-643, Ser-667, Ser-736, Ser-738, Ser-745, Ser-758, and Ser-766 each carry the phosphoserine modification. A Glycyl lysine isopeptide (Lys-Gly) (interchain with G-Cter in SUMO2) cross-link involves residue Lys-807. Residues Ser-866 and Ser-898 each carry the phosphoserine modification. A coiled-coil region spans residues 955–1031 (QELQVVRRSL…LLGLDEQLRA (77 aa)). A phosphoserine mark is found at Ser-1036, Ser-1051, Ser-1056, Ser-1059, and Ser-1114. Disordered regions lie at residues 1095 to 1131 (GESSESVFSQATSESSSVCSSPSHTNRRSRGLPGSKP) and 1147 to 1180 (ALTPTAPSRTGSVQTPPDLESSEEAGGAEEASPV). Low complexity predominate over residues 1103–1117 (SQATSESSSVCSSPS). Thr-1149 carries the phosphothreonine modification. A compositionally biased stretch (polar residues) spans 1151 to 1161 (TAPSRTGSVQT). Residue Ser-1154 is modified to Phosphoserine. Residue Thr-1161 is modified to Phosphothreonine.

It is found in the cytoplasm. This chain is Protein ITPRID2 (Itprid2), found in Mus musculus (Mouse).